The chain runs to 119 residues: Microtubule nucleation factor SSNA1 (119 aa).

Thr2 is modified (N-acetylthreonine). Residues 2–32 (TQQGAALQNYNNELVKCIEELCQKREELCRQ) are important for localization to the centrosome. The stretch at 13-70 (NELVKCIEELCQKREELCRQIQQEEDEKQRLQNEVRQLTEKLARVNENLARKIASRNE) forms a coiled coil.

It belongs to the SSNA1 family. As to quaternary structure, self-associates to form fibrils. Also forms dimers as well as monomers. Interacts with SPAST.

It localises to the nucleus. It is found in the cytoplasm. Its subcellular location is the cytoskeleton. The protein resides in the microtubule organizing center. The protein localises to the centrosome. It localises to the centriole. It is found in the midbody. Its subcellular location is the flagellum basal body. The protein resides in the flagellum axoneme. The protein localises to the cell projection. It localises to the axon. Microtubule-binding protein which stabilizes dynamic microtubules by slowing growth and shrinkage at both plus and minus ends and serves as a sensor of microtubule damage, protecting microtubules from the microtubule-severing enzyme SPAST. Induces microtubule branching which is mediated by the formation of long SSNA1 fibrils which guide microtubule protofilaments to split apart from the mother microtubule and form daughter microtubules. Plays a role in axon outgrowth and branching. Required for cell division. This is Microtubule nucleation factor SSNA1 from Mus musculus (Mouse).